A 299-amino-acid chain; its full sequence is Pantothenate synthetase (299 aa).

41–48 (MGALHEGH) contributes to the ATP binding site. H48 acts as the Proton donor in catalysis. Q72 lines the (R)-pantoate pocket. Position 72 (Q72) interacts with beta-alanine. 158–161 (GQKD) contributes to the ATP binding site. Q164 contributes to the (R)-pantoate binding site. Residues V187 and 195-198 (MSSR) each bind ATP.

Belongs to the pantothenate synthetase family. Homodimer.

It localises to the cytoplasm. It carries out the reaction (R)-pantoate + beta-alanine + ATP = (R)-pantothenate + AMP + diphosphate + H(+). Its pathway is cofactor biosynthesis; (R)-pantothenate biosynthesis; (R)-pantothenate from (R)-pantoate and beta-alanine: step 1/1. Functionally, catalyzes the condensation of pantoate with beta-alanine in an ATP-dependent reaction via a pantoyl-adenylate intermediate. This Acidobacterium capsulatum (strain ATCC 51196 / DSM 11244 / BCRC 80197 / JCM 7670 / NBRC 15755 / NCIMB 13165 / 161) protein is Pantothenate synthetase.